We begin with the raw amino-acid sequence, 252 residues long: Small ribosomal subunit protein uS2A (252 aa).

An N-acetylserine modification is found at Ser2. Residues 209–252 (EVEQQVAEEATTEEAGEEEAKEEVTEEQAEATEWAEENADNVEW) are disordered. A compositionally biased stretch (acidic residues) spans 218–252 (ATTEEAGEEEAKEEVTEEQAEATEWAEENADNVEW).

The protein belongs to the universal ribosomal protein uS2 family. Component of the small ribosomal subunit. Mature ribosomes consist of a small (40S) and a large (60S) subunit. The 40S subunit contains about 33 different proteins and 1 molecule of RNA (18S). The 60S subunit contains about 49 different proteins and 3 molecules of RNA (25S, 5.8S and 5S). Interacts with RPS21.

The protein localises to the cytoplasm. Required for the assembly and/or stability of the 40S ribosomal subunit. Required for the processing of the 20S rRNA-precursor to mature 18S rRNA in a late step of the maturation of 40S ribosomal subunits. This Saccharomyces cerevisiae (strain RM11-1a) (Baker's yeast) protein is Small ribosomal subunit protein uS2A.